Reading from the N-terminus, the 926-residue chain is G-protein coupled receptor family C group 6 member A (926 aa).

The signal sequence occupies residues 1–18; that stretch reads MAFLIILITCFVIILATS. Residues 19–594 lie on the Extracellular side of the membrane; sequence QPCQTPDDFV…EYLNWNDSLA (576 aa). N-linked (GlcNAc...) asparagine glycosylation is found at Asn-121, Asn-259, Asn-332, Asn-378, Asn-452, Asn-555, Asn-567, and Asn-590. The chain crosses the membrane as a helical span at residues 595-615; that stretch reads ILLLILSLLGIIFVLVVGIIF. Over 616–631 the chain is Cytoplasmic; the sequence is TRNLNTPVVKSSGGLR. Residues 632-652 traverse the membrane as a helical segment; the sequence is VCYVILLCHFLNFASTSFFIG. Topologically, residues 653–669 are extracellular; sequence EPQDFTCKTRQTMFGVS. The helical transmembrane segment at 670–690 threads the bilayer; it reads FTLCISCILTKSLKILLAFSF. The Cytoplasmic portion of the chain corresponds to 691–704; it reads DPKLQKFLKCLYRP. A helical membrane pass occupies residues 705–725; it reads ILIIFTCTGIQVVICTLWLIF. Over 726-748 the chain is Extracellular; it reads AAPTVEVNVSLPRVIILECEEGS. An N-linked (GlcNAc...) asparagine glycan is attached at Asn-733. Residues 749 to 769 form a helical membrane-spanning segment; the sequence is ILAFGTMLGYIAILAFICFIF. The Cytoplasmic portion of the chain corresponds to 770 to 782; it reads AFKGKYENYNEAK. Residues 783 to 803 traverse the membrane as a helical segment; it reads FITFGMLIYFIAWITFIPIYA. Over 804 to 810 the chain is Extracellular; that stretch reads TTFGKYV. The chain crosses the membrane as a helical span at residues 811 to 831; sequence PAVEIIVILISNYGILYCTFI. The Cytoplasmic segment spans residues 832–926; sequence PKCYVIICKQ…TLPRKRMSSI (95 aa).

The protein belongs to the G-protein coupled receptor 3 family. Homodimer; disulfide-linked. As to expression, isoform 1 is expressed at high level in brain, skeletal muscle, testis, bone, calvaria, osteoblasts and leukocytes. Expressed at intermediate level in liver, heart, kidney and spleen. Expressed at low level in lung, pancreas, placenta and ovary. Not detected in thymus, prostate, small intestine, tongue and colon. Isoform 1 and isoform 2 are expressed in kidney at the same level. Isoform 2 is expressed at lower level than isoform 1 in the other tissues.

The protein localises to the cell membrane. Functionally, receptor activated by multiple ligands, including osteocalcin (BGLAP), basic amino acids, and various cations. Activated by amino acids with a preference for basic amino acids such as L-Lys, L-Arg and L-ornithine but also by small and polar amino acids. The L-alpha amino acids respond is augmented by divalent cations Ca(2+) and Mg(2+). Seems to act through a G(q)/G(11) and G(i)-coupled pathway. Regulates testosterone production by acting as a ligand for uncarboxylated osteocalcin hormone: osteocalcin-binding at the surface of Leydig cells initiates a signaling response that promotes the expression of enzymes required for testosterone synthesis in a CREB-dependent manner. Mediates the non-genomic effects of androgens in multiple tissue. May coordinate nutritional and hormonal anabolic signals through the sensing of extracellular amino acids, osteocalcin, divalent ions and its responsiveness to anabolic steroids. The sequence is that of G-protein coupled receptor family C group 6 member A (GPRC6A) from Homo sapiens (Human).